We begin with the raw amino-acid sequence, 484 residues long: tRNA sulfurtransferase (484 aa).

The THUMP domain occupies glycine 62 to arginine 166. ATP contacts are provided by residues leucine 184–isoleucine 185, lysine 266, glycine 288, and glutamine 297. Cysteine 345 and cysteine 456 are oxidised to a cystine. In terms of domain architecture, Rhodanese spans proline 404–proline 482. Cysteine 456 acts as the Cysteine persulfide intermediate in catalysis.

The protein belongs to the ThiI family.

Its subcellular location is the cytoplasm. It carries out the reaction [ThiI sulfur-carrier protein]-S-sulfanyl-L-cysteine + a uridine in tRNA + 2 reduced [2Fe-2S]-[ferredoxin] + ATP + H(+) = [ThiI sulfur-carrier protein]-L-cysteine + a 4-thiouridine in tRNA + 2 oxidized [2Fe-2S]-[ferredoxin] + AMP + diphosphate. The enzyme catalyses [ThiS sulfur-carrier protein]-C-terminal Gly-Gly-AMP + S-sulfanyl-L-cysteinyl-[cysteine desulfurase] + AH2 = [ThiS sulfur-carrier protein]-C-terminal-Gly-aminoethanethioate + L-cysteinyl-[cysteine desulfurase] + A + AMP + 2 H(+). It functions in the pathway cofactor biosynthesis; thiamine diphosphate biosynthesis. Functionally, catalyzes the ATP-dependent transfer of a sulfur to tRNA to produce 4-thiouridine in position 8 of tRNAs, which functions as a near-UV photosensor. Also catalyzes the transfer of sulfur to the sulfur carrier protein ThiS, forming ThiS-thiocarboxylate. This is a step in the synthesis of thiazole, in the thiamine biosynthesis pathway. The sulfur is donated as persulfide by IscS. In Marinobacter nauticus (strain ATCC 700491 / DSM 11845 / VT8) (Marinobacter aquaeolei), this protein is tRNA sulfurtransferase.